A 381-amino-acid polypeptide reads, in one-letter code: Trans-enoyl reductase iliB (381 aa).

NADP(+) is bound at residue Val50–Lys53. Ala145–Leu152 serves as a coordination point for substrate. NADP(+) contacts are provided by residues Ser213 to Ser216, Tyr231, and Leu278 to Asp279. Thr298–Phe302 serves as a coordination point for substrate. Position 367–368 (Ile367–Ser368) interacts with NADP(+).

This sequence belongs to the zinc-containing alcohol dehydrogenase family. In terms of assembly, monomer.

The catalysed reaction is N-[(4E,6E,10S,12Z,14E)-6,10-dimethyl-3-oxohexadeca-4,6,12,14-tetraenoyl]-L-tyrosyl-[ACP] = (3E,5S)-3-[(2E,4E,8S,10E,12Z)-1-hydroxy-4,8-dimethyltetradeca-2,4,10,12-tetraen-1-ylidene]-5-[(4-hydroxyphenyl)methyl]pyrrolidine-2,4-dione + holo-[ACP] + H(+). The protein operates within mycotoxin biosynthesis. Functionally, trans-enoyl reductase; part of the gene cluster that mediates the biosynthesis of ilicicolin H, a 4-hydroxy-2-pyridonealkaloid that has potent and broad antifungal activities by inhibiting the mitochondrial respiration chain. IliB collaborates with the hybrid PKS-NRPS synthetase iliA to assemble the backbone of ilicicolin H. The PKS portion of iliA and trans-acting enoyl reductase iliB work together to construct an octaketide, and two methyl groups are introduced by the MT domain of iliA during the chain assembly. The nascent chain is then condensed with tyrosine, catalyzed by the iliA C domain, and the resulting PKS-NRPS hybrid is offloaded by the iliA RED domain to form an advanced tetramic acid intermediate. The biosynthesis of ilicicolin H starts with formation of the tetramic acid by the hybrid PKS-NRPS synthetase iliA with the partnering trans-enoyl reductase iliB since iliA lacks a designated enoylreductase (ER) domain. The cytochrome P450 monooxygenase iliC then catalyzes the ring expansion of the tetramate to the acyclic 2-pyridone. The pericyclase iliD further converts the acyclic 2-pyridone into 8-epi-ilicicolin H. 8-epi-ilicicolin H might then spontaneously convert to ilicicolin H since ilicicolin H is produced in the absence of the epimerase iliE, in contrast to what was observed for the Talaromyces variabilis ilicolin H biosynthetic pathway. The sequence is that of Trans-enoyl reductase iliB from Neonectria sp. (strain DH2).